A 242-amino-acid polypeptide reads, in one-letter code: Leucyl/phenylalanyl-tRNA--protein transferase (242 aa).

This sequence belongs to the L/F-transferase family.

The protein resides in the cytoplasm. The catalysed reaction is N-terminal L-lysyl-[protein] + L-leucyl-tRNA(Leu) = N-terminal L-leucyl-L-lysyl-[protein] + tRNA(Leu) + H(+). The enzyme catalyses N-terminal L-arginyl-[protein] + L-leucyl-tRNA(Leu) = N-terminal L-leucyl-L-arginyl-[protein] + tRNA(Leu) + H(+). It carries out the reaction L-phenylalanyl-tRNA(Phe) + an N-terminal L-alpha-aminoacyl-[protein] = an N-terminal L-phenylalanyl-L-alpha-aminoacyl-[protein] + tRNA(Phe). Functions in the N-end rule pathway of protein degradation where it conjugates Leu, Phe and, less efficiently, Met from aminoacyl-tRNAs to the N-termini of proteins containing an N-terminal arginine or lysine. The polypeptide is Leucyl/phenylalanyl-tRNA--protein transferase (Alcanivorax borkumensis (strain ATCC 700651 / DSM 11573 / NCIMB 13689 / SK2)).